Reading from the N-terminus, the 426-residue chain is MSEIVDIHAREIIDSRGNPTVEAEVTLASGVMGRAAVPSGASTGAREAIELRDDDVRYGGKGVRKAVGHVNGEIREALLGMKATDLAAVDGRMIELDGTPNKSRLGANALLAVSMATAHANAADAGMPLYRHLGGEEAVTLPVPMMNIVNGGAHADNSVDMQEFMILPVGASSIAEAVRYGAEVFHALKKVLHKRGSSTAVGDEGGFAPDLPSNEAAIEVILEAIDKAGFKAGQDIWLGLDCASSEFHKDGKYVLASEGKSFDAAGFVDYLAGWVNQYPILTIEDGMAEDDWAGWKLLTEKLGGKVQLVGDDLFVTNTEILKEGIDKHIANSILIKLNQIGTVSETLAAIHMAHKAGYTAVISHRSGETEDVTIADLSVATQAGQIKTGSLSRSDRVAKYNQLIRIEEALGSAARYAGRGAFKQLG.

Residue glutamine 162 coordinates (2R)-2-phosphoglycerate. Glutamate 204 functions as the Proton donor in the catalytic mechanism. The Mg(2+) site is built by aspartate 241, glutamate 284, and aspartate 311. (2R)-2-phosphoglycerate contacts are provided by lysine 336, arginine 365, serine 366, and lysine 387. Catalysis depends on lysine 336, which acts as the Proton acceptor.

Belongs to the enolase family. Component of the RNA degradosome, a multiprotein complex involved in RNA processing and mRNA degradation. It depends on Mg(2+) as a cofactor.

The protein resides in the cytoplasm. It localises to the secreted. The protein localises to the cell surface. It catalyses the reaction (2R)-2-phosphoglycerate = phosphoenolpyruvate + H2O. Its pathway is carbohydrate degradation; glycolysis; pyruvate from D-glyceraldehyde 3-phosphate: step 4/5. Its function is as follows. Catalyzes the reversible conversion of 2-phosphoglycerate (2-PG) into phosphoenolpyruvate (PEP). It is essential for the degradation of carbohydrates via glycolysis. In Thioalkalivibrio sulfidiphilus (strain HL-EbGR7), this protein is Enolase.